A 151-amino-acid chain; its full sequence is Neuroglobin (151 aa).

One can recognise a Globin domain in the interval 1–149 (MELPEPELIR…VVQAMSRGWG (149 aa)). Heme b-binding residues include histidine 64 and histidine 96.

The protein belongs to the globin family. Monomer. Homodimer and homotetramer; disulfide-linked. Mainly monomeric but also detected as part of homodimers and homotetramers. Interacts with 14-3-3 proteins; regulates the phosphorylation of NGB. Could interact (ferrous form) with G-alpha(i) proteins (GTP-bound form). Phosphorylated during hypoxia by ERK1/ERK2. Phosphorylation regulates the heme pocket hexacoordination preventing the association of His-64 with the heme metal center. Thereby, promotes the access of dioxygen and nitrite to the heme and stimulates the nitrite reductase activity. Phosphorylation during hypoxia is stabilized by 14-3-3 proteins.

It is found in the cytoplasm. The protein resides in the cytosol. The protein localises to the mitochondrion matrix. The enzyme catalyses Fe(III)-heme b-[protein] + nitric oxide + H2O = Fe(II)-heme b-[protein] + nitrite + 2 H(+). Functionally, monomeric globin with a bis-histidyl six-coordinate heme-iron atom through which it can bind dioxygen, carbon monoxide and nitric oxide. Could help transport oxygen and increase its availability to the metabolically active neuronal tissues, though its low quantity in tissues as well as its high affinity for dioxygen, which may limit its oxygen-releasing ability, argue against it. The ferrous/deoxygenated form exhibits a nitrite reductase activity and it could produce nitric oxide which in turn inhibits cellular respiration in response to hypoxia. In its ferrous/deoxygenated state, it may also exhibit GDI (Guanine nucleotide Dissociation Inhibitor) activity toward heterotrimeric G-alpha proteins, thereby regulating signal transduction to facilitate neuroprotective responses in the wake of hypoxia and associated oxidative stress. The polypeptide is Neuroglobin (Bos taurus (Bovine)).